The primary structure comprises 286 residues: UDP-3-O-acyl-N-acetylglucosamine deacetylase (286 aa).

Zn(2+) is bound by residues His79, His237, and Asp241. The active-site Proton donor is the His264.

Belongs to the LpxC family. Zn(2+) serves as cofactor.

It catalyses the reaction a UDP-3-O-[(3R)-3-hydroxyacyl]-N-acetyl-alpha-D-glucosamine + H2O = a UDP-3-O-[(3R)-3-hydroxyacyl]-alpha-D-glucosamine + acetate. It participates in glycolipid biosynthesis; lipid IV(A) biosynthesis; lipid IV(A) from (3R)-3-hydroxytetradecanoyl-[acyl-carrier-protein] and UDP-N-acetyl-alpha-D-glucosamine: step 2/6. Its function is as follows. Catalyzes the hydrolysis of UDP-3-O-myristoyl-N-acetylglucosamine to form UDP-3-O-myristoylglucosamine and acetate, the committed step in lipid A biosynthesis. The polypeptide is UDP-3-O-acyl-N-acetylglucosamine deacetylase (Chlamydia muridarum (strain MoPn / Nigg)).